A 135-amino-acid chain; its full sequence is Histone H3 type 3 (135 aa).

Residues 1–40 (MARTKQTARKSTGGKAPRKQLATKAARKTPATGGVKKPHR) form a disordered region. Lys5 carries the N6-methyllysine modification. At Lys10 the chain carries N6-acetyllysine; alternate. Lys10 is modified (N6-methyllysine; alternate). Phosphoserine is present on Ser11. At Thr12 the chain carries Phosphothreonine. An N6-acetyllysine mark is found at Lys15, Lys19, and Lys24. Lys28 is modified (N6-acetyllysine; alternate). Lys28 is subject to N6-methyllysine; alternate. 2 positions are modified to N6-methyllysine: Lys36 and Lys37.

The protein belongs to the histone H3 family. As to quaternary structure, the nucleosome is a histone octamer containing two molecules each of H2A, H2B, H3 and H4 assembled in one H3-H4 heterotetramer and two H2A-H2B heterodimers. The octamer wraps approximately 147 bp of DNA. Post-translationally, acetylation is generally linked to gene activation. Acetylated to form H3K9ac (11%), H3K14ac (17%), H3K18ac (11%), H3K23ac (16%) and H3K27ac (7%). H3K4, H3K35 and H3K36 are not acetylated. H3K4me prevents acetylation. 32% of the histone H3 are acetylated with, on average, 2.4 acetyl-Lys. They are all continuously deacatylated and re-acetylated with a half-life of approximately 2 minutes. Monomethylated to form H3K4me1 (81%), H3K9me1 (16%), H3K27me1 (25%), H3K35me1 (25%) and H3K36me1 (5%). No methylation at H3K14, H3K18 and H3K23. Methylated by a protein complex that includes Mut11. Set1 methylates specifically H3K4. H3K4me1 is associated with silenced euchromatin. Set3 forms H3K9me1, while H3K9me2 is undetected. H3K9me1 is specifically associated with silent, multi-copy transgenes. In terms of processing, no phosphorylation detected.

The protein resides in the nucleus. It is found in the chromosome. Its function is as follows. Core component of nucleosome. Nucleosomes wrap and compact DNA into chromatin, limiting DNA accessibility to the cellular machineries which require DNA as a template. Histones thereby play a central role in transcription regulation, DNA repair, DNA replication and chromosomal stability. DNA accessibility is regulated via a complex set of post-translational modifications of histones, also called histone code, and nucleosome remodeling. The polypeptide is Histone H3 type 3 (ch3-IV) (Chlamydomonas reinhardtii (Chlamydomonas smithii)).